Consider the following 128-residue polypeptide: Myelin basic protein (128 aa).

Disordered regions lie at residues 1–24 and 82–128; these read AGGAHFFGQEGSRKVPEKGKEPAT and TDGQ…PARR. Composition is skewed to basic and acidic residues over residues 11–23 and 96–107; these read GSRKVPEKGKEPA and KSREAYRGRKDG.

It belongs to the myelin basic protein family. In terms of processing, the N-terminus is blocked.

It is found in the myelin membrane. In terms of biological role, this protein may function to maintain proper structure of myelin. This is Myelin basic protein (MBP) from Carcharhinus obscurus (Dusky shark).